The sequence spans 180 residues: Cell division protein SepF (180 aa).

The disordered stretch occupies residues 1–66 (MAFSFKSFFG…NRNGFAYDNG (66 aa)). A compositionally biased stretch (acidic residues) spans 12–23 (ADDEEEEYEDSG). The span at 24–57 (YEQQPNQGQQQPVNSQQQNTSNQSYSGYNNQNQN) shows a compositional bias: low complexity.

Belongs to the SepF family. In terms of assembly, homodimer. Interacts with FtsZ.

The protein localises to the cytoplasm. Cell division protein that is part of the divisome complex and is recruited early to the Z-ring. Probably stimulates Z-ring formation, perhaps through the cross-linking of FtsZ protofilaments. Its function overlaps with FtsA. The polypeptide is Cell division protein SepF (Oenococcus oeni (strain ATCC BAA-331 / PSU-1)).